The chain runs to 305 residues: Deoxyribonuclease gamma (305 aa).

The N-terminal stretch at 1–20 (MSRELAPLLLLLLSIHSALA) is a signal peptide. A Bipartite nuclear localization signal motif is present at residues 35-51 (KQEDKNAMDVIVKVIKR). Residues Glu-100 and His-155 contribute to the active site. A disulfide bridge links Cys-194 with Cys-231. The not required for free DNA-nuclease activity but required for activity towards liposome-coated DNA stretch occupies residues 284–305 (SRAFTNSKKSVTLRKKTKSKRS). A Nuclear localization signal motif is present at residues 296–304 (LRKKTKSKR).

It belongs to the DNase I family. The cofactor is Ca(2+). It depends on Mg(2+) as a cofactor. In terms of processing, poly-ADP-ribosylated by PARP1. ADP-ribosylation negatively regulates enzymatic activity during apoptosis. Liver and spleen.

Its subcellular location is the nucleus. The protein localises to the endoplasmic reticulum. It localises to the secreted. Inhibited by zinc. In terms of biological role, has DNA hydrolytic activity. Is capable of both single- and double-stranded DNA cleavage, producing DNA fragments with 3'-OH ends. Can cleave chromatin to nucleosomal units and cleaves nucleosomal and liposome-coated DNA. Acts in internucleosomal DNA fragmentation (INDF) during apoptosis and necrosis. The role in apoptosis includes myogenic and neuronal differentiation, and BCR-mediated clonal deletion of self-reactive B cells. Is active on chromatin in apoptotic cell-derived membrane-coated microparticles and thus suppresses anti-DNA autoimmunity. Together with DNASE1, plays a key role in degrading neutrophil extracellular traps (NETs). NETs are mainly composed of DNA fibers and are released by neutrophils to bind pathogens during inflammation. Degradation of intravascular NETs by DNASE1 and DNASE1L3 is required to prevent formation of clots that obstruct blood vessels and cause organ damage following inflammation. The chain is Deoxyribonuclease gamma from Homo sapiens (Human).